Here is a 272-residue protein sequence, read N- to C-terminus: Bis(5'-nucleosyl)-tetraphosphatase, symmetrical (272 aa).

Belongs to the Ap4A hydrolase family.

It carries out the reaction P(1),P(4)-bis(5'-adenosyl) tetraphosphate + H2O = 2 ADP + 2 H(+). In terms of biological role, hydrolyzes diadenosine 5',5'''-P1,P4-tetraphosphate to yield ADP. This chain is Bis(5'-nucleosyl)-tetraphosphatase, symmetrical, found in Shewanella frigidimarina (strain NCIMB 400).